The chain runs to 283 residues: Thymidylate synthase (283 aa).

Arg22 is a binding site for dUMP. Cys160 functions as the Nucleophile in the catalytic mechanism. DUMP is bound by residues 180–183, Asn191, and 221–223; these read RSCD and HIY. Asp183 serves as a coordination point for (6R)-5,10-methylene-5,6,7,8-tetrahydrofolate. Ser282 contributes to the (6R)-5,10-methylene-5,6,7,8-tetrahydrofolate binding site.

The protein belongs to the thymidylate synthase family. Bacterial-type ThyA subfamily. As to quaternary structure, homodimer.

It localises to the cytoplasm. It catalyses the reaction dUMP + (6R)-5,10-methylene-5,6,7,8-tetrahydrofolate = 7,8-dihydrofolate + dTMP. It functions in the pathway pyrimidine metabolism; dTTP biosynthesis. Functionally, catalyzes the reductive methylation of 2'-deoxyuridine-5'-monophosphate (dUMP) to 2'-deoxythymidine-5'-monophosphate (dTMP) while utilizing 5,10-methylenetetrahydrofolate (mTHF) as the methyl donor and reductant in the reaction, yielding dihydrofolate (DHF) as a by-product. This enzymatic reaction provides an intracellular de novo source of dTMP, an essential precursor for DNA biosynthesis. In Histophilus somni (strain 129Pt) (Haemophilus somnus), this protein is Thymidylate synthase.